We begin with the raw amino-acid sequence, 203 residues long: Arcadin-2 (203 aa).

In terms of assembly, interacts with crenactin.

It localises to the cytoplasm. The protein localises to the cytoskeleton. Functionally, part of an actin-like archaeal cytoskeleton. Prevents polymerization of crenactin filaments by binding its C-terminus into crenactin's hydrophobic groove. May act by competing with the D-loop of the following crenactin subunit for the hydrophobic groove. This is Arcadin-2 from Pyrobaculum calidifontis (strain DSM 21063 / JCM 11548 / VA1).